Reading from the N-terminus, the 169-residue chain is Probable phospholipid hydroperoxide glutathione peroxidase (169 aa).

The active site involves C43.

It belongs to the glutathione peroxidase family.

It localises to the cytoplasm. It carries out the reaction a hydroperoxy polyunsaturated fatty acid + 2 glutathione = a hydroxy polyunsaturated fatty acid + glutathione disulfide + H2O. Protects cells and enzymes from oxidative damage, by catalyzing the reduction of hydrogen peroxide, lipid peroxides and organic hydroperoxide, by glutathione. The polypeptide is Probable phospholipid hydroperoxide glutathione peroxidase (Nicotiana tabacum (Common tobacco)).